We begin with the raw amino-acid sequence, 669 residues long: Glycerol uptake/efflux facilitator protein (669 aa).

A compositionally biased stretch (polar residues) spans 1 to 16 (MSNPQKALNDFLSSES). Disordered stretches follow at residues 1-99 (MSNP…TYVP) and 123-147 (QDINHKDNGPPSASSNRAFRPRGQT). Residues 1–254 (MSNPQKALND…WSSVKNTYLK (254 aa)) are Extracellular-facing. The span at 50-68 (NNNNNNNNNNNNSNNNNNG) shows a compositional bias: low complexity. Positions 72-81 (GNDDDYDYEM) are enriched in acidic residues. Composition is skewed to polar residues over residues 87-99 (SPQSARPTPTYVP) and 133-147 (PSASSNRAFRPRGQT). Ser-150 bears the Phosphoserine mark. The tract at residues 167–215 (HTIPESHLSRRRSRSRATSNAGHSANTGATNGRTTGAQTNMESNESPRN) is disordered. Position 168 is a phosphothreonine (Thr-168). A compositionally biased stretch (low complexity) spans 191 to 206 (ANTGATNGRTTGAQTN). 2 positions are modified to phosphoserine: Ser-209 and Ser-212. A helical transmembrane segment spans residues 255-275 (EFLAEFMGTMVMIIFGSAVVC). Residues 276-325 (QVNVAGKIQQDNFNVALDNLNVTGSSAETIDAMKSLTSLVSSVAGGTFDD) lie on the Cytoplasmic side of the membrane. The chain crosses the membrane as a helical span at residues 326-346 (VALGWAAAVVMGYFCAGGSAI). At 347–369 (SGAHLNPSITLANLVYRGFPLKK) the chain is on the extracellular side. The NPA 1 signature appears at 352–354 (NPS). A helical membrane pass occupies residues 370 to 390 (VPYYFAGQLIGAFTGALILFI). At 391–446 (WYKRVLQEAYSDWWMNESVAGMFCVFPKPYLSSGRQFFSEFLCGAMLQAGTFALTD) the chain is on the cytoplasmic side. The helical transmembrane segment at 447-467 (PYTCLSSDVFPLMMFILIFII) threads the bilayer. Over 468–506 (NASMAYQTGTAMNLARDLGPRLALYAVGFDHKMLWVHHH) the chain is Extracellular. Residues 480–482 (NLA) carry the NPA 2 motif. Residues 507-527 (HFFWVPMVGPFIGALMGGLVY) form a helical membrane-spanning segment. The Cytoplasmic portion of the chain corresponds to 528–669 (DVCIYQGHES…SHYGNAKKVT (142 aa)). Disordered regions lie at residues 591–615 (LQKTKTKSSISDNENEAGEKKVQFK) and 635–669 (DSIETASLGATTTDSIGLSDTSSEDSHYGNAKKVT). The span at 638 to 655 (ETASLGATTTDSIGLSDT) shows a compositional bias: polar residues.

The protein belongs to the MIP/aquaporin (TC 1.A.8) family.

Its subcellular location is the membrane. In terms of biological role, channel protein for glycerol. Has a role in both glycerol influx and efflux. Plays a role in osmoregulation: under osmotic stress the channel is apparently closed to allow accumulation of glycerol in the cell under hyperosmotic conditions. The protein is Glycerol uptake/efflux facilitator protein (FPS1) of Saccharomyces cerevisiae (strain ATCC 204508 / S288c) (Baker's yeast).